Reading from the N-terminus, the 144-residue chain is Large ribosomal subunit protein uL16 (144 aa).

Basic residues predominate over residues M1–K16. Residues M1–E20 are disordered.

Belongs to the universal ribosomal protein uL16 family. As to quaternary structure, part of the 50S ribosomal subunit.

Binds 23S rRNA and is also seen to make contacts with the A and possibly P site tRNAs. The polypeptide is Large ribosomal subunit protein uL16 (Limosilactobacillus fermentum (strain NBRC 3956 / LMG 18251) (Lactobacillus fermentum)).